The following is a 119-amino-acid chain: Flagellar transcriptional regulator FlhD (119 aa).

Belongs to the FlhD family. In terms of assembly, homodimer; disulfide-linked. Forms a heterohexamer composed of two FlhC and four FlhD subunits. Each FlhC binds a FlhD dimer, forming a heterotrimer, and a hexamer assembles by dimerization of two heterotrimers.

It localises to the cytoplasm. Its function is as follows. Functions in complex with FlhC as a master transcriptional regulator that regulates transcription of several flagellar and non-flagellar operons by binding to their promoter region. Activates expression of class 2 flagellar genes, including fliA, which is a flagellum-specific sigma factor that turns on the class 3 genes. Also regulates genes whose products function in a variety of physiological pathways. In Cronobacter sakazakii (strain ATCC BAA-894) (Enterobacter sakazakii), this protein is Flagellar transcriptional regulator FlhD.